Reading from the N-terminus, the 264-residue chain is Cytosolic Fe-S cluster assembly factor Nubp2 homolog (264 aa).

ATP is bound at residue 14-21 (GKGGVGKS). [4Fe-4S] cluster is bound by residues cysteine 188 and cysteine 191.

This sequence belongs to the Mrp/NBP35 ATP-binding proteins family. NUBP2/CFD1 subfamily. As to quaternary structure, heterotetramer of 2 Nubp1 and 2 Nubp2 chains. The cofactor is [4Fe-4S] cluster.

Its subcellular location is the cytoplasm. Functionally, component of the cytosolic iron-sulfur (Fe/S) protein assembly (CIA) machinery. Required for maturation of extramitochondrial Fe-S proteins. The Nubp1-Nubp2 heterotetramer forms a Fe-S scaffold complex, mediating the de novo assembly of an Fe-S cluster and its transfer to target apoproteins. The chain is Cytosolic Fe-S cluster assembly factor Nubp2 homolog from Drosophila grimshawi (Hawaiian fruit fly).